The following is a 435-amino-acid chain: Methylenetetrahydrofolate--tRNA-(uracil-5-)-methyltransferase TrmFO (435 aa).

Position 9–14 (9–14 (GAGLAG)) interacts with FAD.

The protein belongs to the MnmG family. TrmFO subfamily. FAD serves as cofactor.

It is found in the cytoplasm. It catalyses the reaction uridine(54) in tRNA + (6R)-5,10-methylene-5,6,7,8-tetrahydrofolate + NADH + H(+) = 5-methyluridine(54) in tRNA + (6S)-5,6,7,8-tetrahydrofolate + NAD(+). It carries out the reaction uridine(54) in tRNA + (6R)-5,10-methylene-5,6,7,8-tetrahydrofolate + NADPH + H(+) = 5-methyluridine(54) in tRNA + (6S)-5,6,7,8-tetrahydrofolate + NADP(+). Functionally, catalyzes the folate-dependent formation of 5-methyl-uridine at position 54 (M-5-U54) in all tRNAs. This Staphylococcus aureus (strain JH1) protein is Methylenetetrahydrofolate--tRNA-(uracil-5-)-methyltransferase TrmFO.